We begin with the raw amino-acid sequence, 655 residues long: Probable potassium transport system protein Kup (655 aa).

A run of 12 helical transmembrane segments spans residues 19–39 (GLLI…LYVM), 42–62 (IAGG…CVFW), 102–122 (VWPA…TPPI), 132–152 (LIFN…VMLF), 161–181 (IVGK…ATLG), 214–234 (SGFW…ALYS), 246–266 (ISWI…GAWI), 282–302 (IMPE…AIIA), 338–358 (LFIP…VLWF), 370–390 (LAIN…LLII), 395–415 (FIWV…FLVA), and 420–440 (FFHG…IMII).

Belongs to the HAK/KUP transporter (TC 2.A.72) family.

Its subcellular location is the cell inner membrane. It catalyses the reaction K(+)(in) + H(+)(in) = K(+)(out) + H(+)(out). Transport of potassium into the cell. Likely operates as a K(+):H(+) symporter. This Cytophaga hutchinsonii (strain ATCC 33406 / DSM 1761 / CIP 103989 / NBRC 15051 / NCIMB 9469 / D465) protein is Probable potassium transport system protein Kup.